A 715-amino-acid chain; its full sequence is Serrate RNA effector molecule homolog (715 aa).

Disordered regions lie at residues Met-1–Pro-87, Glu-223–Ala-259, and Glu-629–Pro-715. 3 stretches are compositionally biased toward basic and acidic residues: residues Gly-7 to Arg-25, Tyr-37 to Asp-57, and Glu-223 to Glu-242. The segment covering Pro-243–Thr-256 has biased composition (acidic residues). A compositionally biased stretch (basic and acidic residues) spans Glu-629–Gly-659.

It belongs to the ARS2 family.

The protein localises to the nucleus. Acts as a mediator between the cap-binding complex (CBC) and the primary microRNAs (miRNAs) processing machinery. Contributes to the stability and delivery of capped primary miRNA transcripts to the primary miRNA processing complex, thereby playing a role in RNA-mediated gene silencing (RNAi) by miRNAs. The chain is Serrate RNA effector molecule homolog from Caenorhabditis briggsae.